The chain runs to 385 residues: Palmitoyl-[acyl-carrier-protein] 4-desaturase, chloroplastic (385 aa).

Residues methionine 1–methionine 36 constitute a chloroplast transit peptide. Residues glutamate 126, glutamate 164, histidine 167, glutamate 217, glutamate 250, and histidine 253 each contribute to the Fe cation site.

Belongs to the fatty acid desaturase type 2 family. Homodimer. The cofactor is Fe(2+). As to expression, found only in tissues which synthesize petroselinic acid, such as developing seeds.

The protein localises to the plastid. It localises to the chloroplast. It catalyses the reaction hexadecanoyl-[ACP] + 2 reduced [2Fe-2S]-[ferredoxin] + O2 + 2 H(+) = (4Z)-hexadecenoyl-[ACP] + 2 oxidized [2Fe-2S]-[ferredoxin] + 2 H2O. Converts palmitoyl-ACP to (4Z)-hexadec-4-enoyl-ACP by introduction of a cis double bond between carbons 4 and 5 of the acyl chain. The sequence is that of Palmitoyl-[acyl-carrier-protein] 4-desaturase, chloroplastic from Coriandrum sativum (Coriander).